The chain runs to 144 residues: MPRSPSKTSPRKGSPRRGSPSRKASPKRGGKGAKRAGKGGRRRNVVRRRRRRRESYGIYIYKVLKQVHPDTGISSRGMSVMNSFVNDIFGRIAGEASRLTRANRRSTISSREIQTAVRLLLPGELAKHAVSEGTKAVTKYTTSR.

The tract at residues 1 to 51 (MPRSPSKTSPRKGSPRRGSPSRKASPKRGGKGAKRAGKGGRRRNVVRRRRR) is disordered. 5 consecutive short sequence motifs (SPKK motif) follow at residues 4-7 (SPSK), 9-12 (SPRK), 14-17 (SPRR), 19-22 (SPSR), and 25-28 (SPKR). Phosphoserine occurs at positions 14, 19, and 25. Residues 24 to 51 (ASPKRGGKGAKRAGKGGRRRNVVRRRRR) show a composition bias toward basic residues. Ser-131 is a glycosylation site (O-linked (GlcNAc) serine). Lys-139 is covalently cross-linked (Glycyl lysine isopeptide (Lys-Gly) (interchain with G-Cter in ubiquitin)).

This sequence belongs to the histone H2B family. In terms of assembly, the nucleosome is a histone octamer containing two molecules each of H2A, H2B, H3 and H4 assembled in one H3-H4 heterotetramer and two H2A-H2B heterodimers. The octamer wraps approximately 147 bp of DNA. In terms of processing, monoubiquitination of Lys-139 gives a specific tag for epigenetic transcriptional activation and is also prerequisite for histone H3 'Lys-4' and 'Lys-79' methylation. Post-translationally, phosphorylated on SPKK motifs 3, 4 and 5; which may regulate DNA binding. Dephosphorylated during maturation of spermatids to mature sperm and rephosphorylated at fertilization. GlcNAcylation at Ser-131 promotes monoubiquitination of Lys-139. It fluctuates in response to extracellular glucose, and associates with transcribed genes.

The protein resides in the nucleus. It is found in the chromosome. Core component of nucleosome. Nucleosomes wrap and compact DNA into chromatin, limiting DNA accessibility to the cellular machineries which require DNA as a template. Histones thereby play a central role in transcription regulation, DNA repair, DNA replication and chromosomal stability. DNA accessibility is regulated via a complex set of post-translational modifications of histones, also called histone code, and nucleosome remodeling. The chain is Histone H2B.2, sperm from Strongylocentrotus purpuratus (Purple sea urchin).